We begin with the raw amino-acid sequence, 296 residues long: MDHIDKKCSMNAIVGTTNAGKSTLINMLVGRKVAAVTPKVQTTRVRMHAVLNNENVQLIFIDTPGIFSPKTKLEKFIVKHAWMSLKGIENVILLLDVKNYLNKHIEKIISRIKQSNINAILVVNKIDMVSQALVDKAIEYMYSLHNFSKTFTISALHDIGLNRLINYLCEISPSGPWLYPEGQISDAPLKFFIAEITREKLFLSLHHELPYSLSVVTEALEEKVDGSLIVKQVIYVTKDNHKTIILGKKGEMIKKISIESRSELEKILDLKIHLFLFVKVRELWQDHLNECVGYVE.

Residues 7–174 (KCSMNAIVGT…INYLCEISPS (168 aa)) form the Era-type G domain. The interval 15–22 (GTTNAGKS) is G1. 15-22 (GTTNAGKS) is a GTP binding site. A G2 region spans residues 41–45 (QTTRV). Residues 62–65 (DTPG) form a G3 region. Residues 62–66 (DTPGI) and 124–127 (NKID) contribute to the GTP site. Residues 124 to 127 (NKID) are G4. Residues 153–155 (ISA) form a G5 region. One can recognise a KH type-2 domain in the interval 205–282 (LHHELPYSLS…HLFLFVKVRE (78 aa)).

Belongs to the TRAFAC class TrmE-Era-EngA-EngB-Septin-like GTPase superfamily. Era GTPase family. Monomer.

The protein resides in the cytoplasm. It localises to the cell inner membrane. In terms of biological role, an essential GTPase that binds both GDP and GTP, with rapid nucleotide exchange. Plays a role in 16S rRNA processing and 30S ribosomal subunit biogenesis and possibly also in cell cycle regulation and energy metabolism. The polypeptide is GTPase Era (Ehrlichia canis (strain Jake)).